We begin with the raw amino-acid sequence, 367 residues long: snRNA-activating protein complex subunit 1 (367 aa).

Residues M1–V168 form an SNAPC3-binding region. Residues P164–K268 form an SNAPC4-binding region. Disordered stretches follow at residues K228–E254 and K278–H367. The segment covering K238 to E254 has biased composition (basic and acidic residues). 2 positions are modified to phosphoserine: S289 and S290. A compositionally biased stretch (polar residues) spans C292 to V301.

Part of the SNAPc complex composed of 5 subunits: SNAPC1, SNAPC2, SNAPC3, SNAPC4 and SNAPC5. SNAPC1 interacts with SNAPC3, SNAPC4 and TBP.

The protein resides in the nucleus. Functionally, part of the SNAPc complex required for the transcription of both RNA polymerase II and III small-nuclear RNA genes. Binds to the proximal sequence element (PSE), a non-TATA-box basal promoter element common to these 2 types of genes. Recruits TBP and BRF2 to the U6 snRNA TATA box. This is snRNA-activating protein complex subunit 1 (SNAPC1) from Macaca fascicularis (Crab-eating macaque).